Reading from the N-terminus, the 274-residue chain is Glutamate racemase (274 aa).

Residues 10–11 and 42–43 contribute to the substrate site; these read DS and YG. Cys-73 (proton donor/acceptor) is an active-site residue. 74–75 contributes to the substrate binding site; it reads NT. Cys-184 (proton donor/acceptor) is an active-site residue. 185–186 is a binding site for substrate; that stretch reads TH.

Belongs to the aspartate/glutamate racemases family.

The enzyme catalyses L-glutamate = D-glutamate. Its pathway is cell wall biogenesis; peptidoglycan biosynthesis. Its function is as follows. Provides the (R)-glutamate required for cell wall biosynthesis. In Latilactobacillus sakei subsp. sakei (strain 23K) (Lactobacillus sakei subsp. sakei), this protein is Glutamate racemase.